The sequence spans 353 residues: Photosystem II protein D1 (353 aa).

Position 2 is an N-acetylthreonine (Thr-2). The residue at position 2 (Thr-2) is a Phosphothreonine. Transmembrane regions (helical) follow at residues Tyr-29–Ser-46, His-118–Leu-133, and Trp-142–Ala-156. Residue His-118 participates in chlorophyll a binding. Pheophytin a is bound at residue Tyr-126. [CaMn4O5] cluster contacts are provided by Asp-170 and Glu-189. A helical membrane pass occupies residues Phe-197–Leu-218. His-198 is a chlorophyll a binding site. Residues His-215 and Ser-264 to Phe-265 contribute to the a quinone site. His-215 contributes to the Fe cation binding site. Position 272 (His-272) interacts with Fe cation. The helical transmembrane segment at Phe-274–Leu-288 threads the bilayer. 4 residues coordinate [CaMn4O5] cluster: His-332, Glu-333, Asp-342, and Ala-344. Positions Ala-345–Gly-353 are excised as a propeptide.

The protein belongs to the reaction center PufL/M/PsbA/D family. In terms of assembly, PSII is composed of 1 copy each of membrane proteins PsbA, PsbB, PsbC, PsbD, PsbE, PsbF, PsbH, PsbI, PsbJ, PsbK, PsbL, PsbM, PsbT, PsbX, PsbY, PsbZ, Psb30/Ycf12, at least 3 peripheral proteins of the oxygen-evolving complex and a large number of cofactors. It forms dimeric complexes. The cofactor is The D1/D2 heterodimer binds P680, chlorophylls that are the primary electron donor of PSII, and subsequent electron acceptors. It shares a non-heme iron and each subunit binds pheophytin, quinone, additional chlorophylls, carotenoids and lipids. D1 provides most of the ligands for the Mn4-Ca-O5 cluster of the oxygen-evolving complex (OEC). There is also a Cl(-1) ion associated with D1 and D2, which is required for oxygen evolution. The PSII complex binds additional chlorophylls, carotenoids and specific lipids.. In terms of processing, tyr-161 forms a radical intermediate that is referred to as redox-active TyrZ, YZ or Y-Z. C-terminally processed by CTPA; processing is essential to allow assembly of the oxygen-evolving complex and thus photosynthetic growth.

The protein localises to the plastid. The protein resides in the chloroplast thylakoid membrane. It catalyses the reaction 2 a plastoquinone + 4 hnu + 2 H2O = 2 a plastoquinol + O2. Functionally, photosystem II (PSII) is a light-driven water:plastoquinone oxidoreductase that uses light energy to abstract electrons from H(2)O, generating O(2) and a proton gradient subsequently used for ATP formation. It consists of a core antenna complex that captures photons, and an electron transfer chain that converts photonic excitation into a charge separation. The D1/D2 (PsbA/PsbD) reaction center heterodimer binds P680, the primary electron donor of PSII as well as several subsequent electron acceptors. The polypeptide is Photosystem II protein D1 (Hordeum vulgare (Barley)).